The sequence spans 345 residues: Sorting nexin-15 (345 aa).

One can recognise a PX domain in the interval 1 to 130 (MSRQAKDDFL…EFFRGGEVTR (130 aa)). An Omega-N-methylarginine modification is found at R105. The tract at residues 133–163 (EVSGDLHILPPPLIPTPPPDEPRVQPHETWL) is disordered. The span at 141-151 (LPPPLIPTPPP) shows a compositional bias: pro residues. 2 positions are modified to phosphoserine: S208 and S234. Residues 226-274 (SKEEGAGPSPTHIGELAALEAGSGRPDQEPWEPGGQAEEDDEEGEPAPA) form a disordered region. An MIT domain is found at 272–345 (APAYLSQATE…AEEILHLHLS (74 aa)).

Belongs to the sorting nexin family.

Its function is as follows. May be involved in several stages of intracellular trafficking. Overexpression of SNX15 disrupts the normal trafficking of proteins from the plasma membrane to recycling endosomes or the TGN. This is Sorting nexin-15 (SNX15) from Bos taurus (Bovine).